A 418-amino-acid chain; its full sequence is MIMFQKPKGTRDFLPEEMKKRKVIEKKLRKVFDSYNFSEINTPTFESFELLSKKTGDEIRTQLFVFKDHGDREMGLRPELTSSVARFYINEFKNTPKPVKLYYFTNCFRYENPQAGRYREFWQMGSELIGSNKPIADAEVINMAIEGLKEINMDFEINIGHLGVLKGVFEKYDLSDDEGNEIRRLIDKEDMDGLKSALNRIESEKNIEISEKVFEVLDLKGGREVISKLKEKLAEFESSIAALENLDSILEFVPHEYIINFGIARGLDYYTGMVFEIYGKREGARQVCGGGRYDNLIELFEGEPSPAVGFAYGFDRIMLNIDDFEVEEESIFVVPVKSSDMLLNECLKIAKTLREAGKAVELDLMGRKLNKALNYANTKGIKKVIIVGENDILEGKVALKNMETGEQSLIELKDILTI.

This sequence belongs to the class-II aminoacyl-tRNA synthetase family.

Its subcellular location is the cytoplasm. It catalyses the reaction tRNA(His) + L-histidine + ATP = L-histidyl-tRNA(His) + AMP + diphosphate + H(+). This is Histidine--tRNA ligase from Methanococcus maripaludis (strain C7 / ATCC BAA-1331).